The following is a 207-amino-acid chain: Ras-related protein Rab-5B (207 aa).

Gly2 is lipidated: N-myristoyl glycine. Residues 41–49 (GDSGVGKSS), 60–66 (SEKHQVT), 90–94 (DTGGQ), 148–151 (NKKD), and 176–178 (SAK) contribute to the GTP site. The short motif at 63 to 71 (HQVTIGAAF) is the Effector region element.

It belongs to the small GTPase superfamily. Rab family. As to quaternary structure, interacts with CK1. May interact with ARF1. In terms of processing, myristoylation is required for cell membrane and food vacuole membrane localization. Post-translationally, may be palmitoylated on Cys-3. Lacks the C-terminal cysteine motifs subject to isoprenylation present in mammalian RAB5B homolog.

The protein resides in the cell membrane. It is found in the vacuole membrane. It localises to the vesicle. It catalyses the reaction GTP + H2O = GDP + phosphate + H(+). With respect to regulation, alternates between an inactive GDP-bound form and an active GTP-bound form. Activated by guanine nucleotide-exchange factors (GEFs) and inactivated by GTPase-activating proteins (GAPs). Functionally, small GTPase which regulates vesicle trafficking between organelles. May be involved in the trafficking of the N-myristoylated AK2 from the endoplasmic reticulum to the parasitophorous vacuole membrane. This Plasmodium falciparum (isolate 3D7) protein is Ras-related protein Rab-5B.